A 1192-amino-acid chain; its full sequence is Probable ATP-dependent RNA helicase kurz (1192 aa).

The disordered stretch occupies residues 170–214; sequence ELQAKRKNPNVISVEEDDEDSSSSDEDDEEAPAQSAPIAIPTPVS. Residues 183–200 are compositionally biased toward acidic residues; the sequence is VEEDDEDSSSSDEDDEEA. A Helicase ATP-binding domain is found at 270 to 436; that stretch reads METINENPIV…TRLFKIPPPL (167 aa). 283–290 provides a ligand contact to ATP; the sequence is GETGSGKT. A DEAH box motif is present at residues 379-382; sequence DEAH. A disordered region spans residues 504–529; sequence APTKDVAKNGKVSEEEKEETIDDAAS. The span at 505–517 shows a compositional bias: basic and acidic residues; sequence PTKDVAKNGKVSE. At serine 529 the chain carries Phosphoserine. Threonine 530 bears the Phosphothreonine mark. Residues 540 to 746 form the Helicase C-terminal domain; that stretch reads DMKRVIRNIR…DLMLQMRCMG (207 aa). The span at 567 to 583 shows a compositional bias: basic and acidic residues; the sequence is DDYKLPGDDTEADMHEQ. Positions 567–612 are disordered; that stretch reads DDYKLPGDDTEADMHEQPDEDDEQEGLEEDNDDELGLEDESGMGSG. Residues 584 to 607 show a composition bias toward acidic residues; sequence PDEDDEQEGLEEDNDDELGLEDES.

This sequence belongs to the DEAD box helicase family. DEAH subfamily.

The catalysed reaction is ATP + H2O = ADP + phosphate + H(+). The polypeptide is Probable ATP-dependent RNA helicase kurz (kz) (Drosophila melanogaster (Fruit fly)).